We begin with the raw amino-acid sequence, 365 residues long: Mitogen-activated protein kinase HOG1 (365 aa).

Residues 20-306 form the Protein kinase domain; the sequence is YSDLQPVGMG…ATNALAHEYL (287 aa). ATP-binding positions include 26–34 and K49; that span reads VGMGAFGLV. The active-site Proton acceptor is the D148. Positions 178–180 match the TXY motif; it reads TGY.

Belongs to the protein kinase superfamily. Ser/Thr protein kinase family. MAP kinase subfamily. HOG1 sub-subfamily. Mg(2+) serves as cofactor.

The protein localises to the cytoplasm. Its subcellular location is the nucleus. It carries out the reaction L-seryl-[protein] + ATP = O-phospho-L-seryl-[protein] + ADP + H(+). The enzyme catalyses L-threonyl-[protein] + ATP = O-phospho-L-threonyl-[protein] + ADP + H(+). In terms of biological role, proline-directed serine/threonine-protein kinase involved in a signal transduction pathway that is activated by changes in the osmolarity of the extracellular environment. Controls osmotic regulation of transcription of target genes. Involved in environmental stress response, hyphal growth, conidiation and possibly secondary metabolism such as ustiloxin biosynthesis or the biosynthesis of other phytotoxic compounds that are inhibitory to rice shoot growth during seed germination. Plays a key role in responses to cell wall and membrane stresses but not oxidative stress. This is Mitogen-activated protein kinase HOG1 from Ustilaginoidea virens (Rice false smut fungus).